Reading from the N-terminus, the 206-residue chain is ATP synthase subunit b (206 aa).

Residues 10–30 (LLKPFVSTAAICLLVAGTVVL) traverse the membrane as a helical segment.

The protein belongs to the ATPase B chain family. In terms of assembly, F-type ATPases have 2 components, F(1) - the catalytic core - and F(0) - the membrane proton channel. F(1) has five subunits: alpha(3), beta(3), gamma(1), delta(1), epsilon(1). F(0) has three main subunits: a(1), b(2) and c(10-14). The alpha and beta chains form an alternating ring which encloses part of the gamma chain. F(1) is attached to F(0) by a central stalk formed by the gamma and epsilon chains, while a peripheral stalk is formed by the delta and b chains.

It localises to the cell inner membrane. In terms of biological role, f(1)F(0) ATP synthase produces ATP from ADP in the presence of a proton or sodium gradient. F-type ATPases consist of two structural domains, F(1) containing the extramembraneous catalytic core and F(0) containing the membrane proton channel, linked together by a central stalk and a peripheral stalk. During catalysis, ATP synthesis in the catalytic domain of F(1) is coupled via a rotary mechanism of the central stalk subunits to proton translocation. Component of the F(0) channel, it forms part of the peripheral stalk, linking F(1) to F(0). In Geobacter sulfurreducens (strain ATCC 51573 / DSM 12127 / PCA), this protein is ATP synthase subunit b.